Consider the following 829-residue polypeptide: Probable beta-glucosidase H (829 aa).

A glycan (N-linked (GlcNAc...) asparagine) is linked at Asn13. Asp225 is an active-site residue. Asn304, Asn473, Asn602, Asn627, Asn664, and Asn749 each carry an N-linked (GlcNAc...) asparagine glycan. The region spanning Arg389–Val548 is the PA14 domain.

This sequence belongs to the glycosyl hydrolase 3 family.

Its subcellular location is the secreted. It catalyses the reaction Hydrolysis of terminal, non-reducing beta-D-glucosyl residues with release of beta-D-glucose.. The protein operates within glycan metabolism; cellulose degradation. In terms of biological role, beta-glucosidases are one of a number of cellulolytic enzymes involved in the degradation of cellulosic biomass. Catalyzes the last step releasing glucose from the inhibitory cellobiose. The chain is Probable beta-glucosidase H (bglH) from Aspergillus fumigatus (strain CBS 144.89 / FGSC A1163 / CEA10) (Neosartorya fumigata).